Reading from the N-terminus, the 174-residue chain is MYHKYKNVELVKPSGLELKDRLVSVNRVTKVTKGGRAFGFSAIVVVGDENGVVGHGLGKSKDVSEAIAKAVEDAKKNLVKIPLSGKSVPHEQKGKFGGARVNLMPASHGTGVIAGGAVRSVLESVGIHDVLSKSQGSSNPHNVVKATFDALLQMRSAYTVSRQRGISLEKVFKG.

The region spanning 18-81 is the S5 DRBM domain; the sequence is LKDRLVSVNR…EDAKKNLVKI (64 aa).

This sequence belongs to the universal ribosomal protein uS5 family. Part of the 30S ribosomal subunit. Contacts proteins S4 and S8.

Its function is as follows. With S4 and S12 plays an important role in translational accuracy. Functionally, located at the back of the 30S subunit body where it stabilizes the conformation of the head with respect to the body. This chain is Small ribosomal subunit protein uS5, found in Flavobacterium psychrophilum (strain ATCC 49511 / DSM 21280 / CIP 103535 / JIP02/86).